The chain runs to 189 residues: MTKSNETERMEESEETHSSDIRSASESDHASGSDHTESADEIPTADAEQGELEQLEKLKDDLARERAAFHNFRMARAKQAEIERDRTRSEVIRVILPVLDDFARIEKHSTLDDPFKAVITKLRSAMEKIGLTAFGNPGDPFNPELHEALFQNPSPDVQTETVQDVIEAGYCLGETVIRAAKVVVQVPNG.

Over residues 1 to 38 (MTKSNETERMEESEETHSSDIRSASESDHASGSDHTES) the composition is skewed to basic and acidic residues. Residues 1–54 (MTKSNETERMEESEETHSSDIRSASESDHASGSDHTESADEIPTADAEQGELEQ) form a disordered region.

This sequence belongs to the GrpE family. As to quaternary structure, homodimer.

It localises to the cytoplasm. Functionally, participates actively in the response to hyperosmotic and heat shock by preventing the aggregation of stress-denatured proteins, in association with DnaK and GrpE. It is the nucleotide exchange factor for DnaK and may function as a thermosensor. Unfolded proteins bind initially to DnaJ; upon interaction with the DnaJ-bound protein, DnaK hydrolyzes its bound ATP, resulting in the formation of a stable complex. GrpE releases ADP from DnaK; ATP binding to DnaK triggers the release of the substrate protein, thus completing the reaction cycle. Several rounds of ATP-dependent interactions between DnaJ, DnaK and GrpE are required for fully efficient folding. In Tropheryma whipplei (strain TW08/27) (Whipple's bacillus), this protein is Protein GrpE.